Consider the following 463-residue polypeptide: Zinc finger protein PLAGL1 (463 aa).

7 consecutive C2H2-type zinc fingers follow at residues 4–26 (YPCQ…NYSH), 32–56 (YKCL…MATH), 62–84 (HQCA…LQTH), 91–113 (FGCE…LALH), 120–142 (LTCG…LKAH), 156–178 (HQCD…LVVH), and 184–207 (FLCQ…KKTH). The interval 285-310 (LHPVAPPTSPPQPLQNHKYNTSSTSY) is disordered. Residues 287-297 (PVAPPTSPPQP) show a composition bias toward pro residues. Residues 298 to 310 (LQNHKYNTSSTSY) are compositionally biased toward polar residues.

The protein belongs to the krueppel C2H2-type zinc-finger protein family. As to quaternary structure, interacts with THRSP.

Its subcellular location is the nucleus. Functionally, acts as a transcriptional activator. Involved in the transcriptional regulation of type 1 receptor for pituitary adenylate cyclase-activating polypeptide. This Sus scrofa (Pig) protein is Zinc finger protein PLAGL1 (PLAGL1).